The following is a 504-amino-acid chain: L-carnitine/gamma-butyrobetaine antiporter (504 aa).

12 helical membrane passes run 10–30 (IEPK…WLTV), 51–71 (WGWA…WLVF), 92–112 (IFMM…SIEI), 143–163 (GPLP…FFFV), 195–215 (FYLV…TPLV), 231–251 (LDAI…ACGL), 263–283 (SYLS…SFIM), 316–336 (WTVF…IFLA), 347–367 (LCFG…TVLG), 398–418 (WAAL…CFIA), 446–466 (LLVR…LLAL), and 475–495 (AIIA…LSFI).

This sequence belongs to the BCCT transporter (TC 2.A.15) family. CaiT subfamily. In terms of assembly, homotrimer.

Its subcellular location is the cell inner membrane. The enzyme catalyses 4-(trimethylamino)butanoate(in) + (R)-carnitine(out) = 4-(trimethylamino)butanoate(out) + (R)-carnitine(in). The protein operates within amine and polyamine metabolism; carnitine metabolism. Functionally, catalyzes the exchange of L-carnitine for gamma-butyrobetaine. In Escherichia coli O6:K15:H31 (strain 536 / UPEC), this protein is L-carnitine/gamma-butyrobetaine antiporter.